We begin with the raw amino-acid sequence, 512 residues long: Activin receptor type-2B (512 aa).

The N-terminal stretch at 1–18 (MTAPWVALALLWGSLCAG) is a signal peptide. Topologically, residues 19-137 (SGRGEAETRE…PPPTAPTLLT (119 aa)) are extracellular. Intrachain disulfides connect cysteine 29/cysteine 59, cysteine 49/cysteine 77, cysteine 84/cysteine 103, cysteine 90/cysteine 102, and cysteine 104/cysteine 109. N-linked (GlcNAc...) asparagine glycans are attached at residues asparagine 42 and asparagine 65. Residues 138-158 (VLAYSLLPIGGLSLIVLLAFW) traverse the membrane as a helical segment. The Cytoplasmic segment spans residues 159–512 (MYRHRKPPYG…VDLPPKESSI (354 aa)). A Protein kinase domain is found at 190–480 (LQLLEIKARG…AGCVEERVSL (291 aa)). ATP is bound by residues 196–204 (KARGRFGCV) and lysine 217. Aspartate 321 (proton acceptor) is an active-site residue. Residues 491–512 (DCLVSLVTSVTNVDLPPKESSI) form an interaction with DYNLT1 region.

This sequence belongs to the protein kinase superfamily. TKL Ser/Thr protein kinase family. TGFB receptor subfamily. Forms an activin receptor complex with activin type II receptors such as ACVR1B. Interacts with VPS39. Interacts with DYNLT1. Interacts with BMP3. Interacts with BMP2. Interacts with BMP6. Mg(2+) is required as a cofactor. The cofactor is Mn(2+). Post-translationally, phosphorylated. Constitutive phosphorylation is in part catalyzed by its own kinase activity.

The protein resides in the cell membrane. The catalysed reaction is L-threonyl-[receptor-protein] + ATP = O-phospho-L-threonyl-[receptor-protein] + ADP + H(+). The enzyme catalyses L-seryl-[receptor-protein] + ATP = O-phospho-L-seryl-[receptor-protein] + ADP + H(+). In terms of biological role, transmembrane serine/threonine kinase activin type-2 receptor forming an activin receptor complex with activin type-1 serine/threonine kinase receptors (ACVR1, ACVR1B or ACVR1c). Transduces the activin signal from the cell surface to the cytoplasm and is thus regulating many physiological and pathological processes including neuronal differentiation and neuronal survival, hair follicle development and cycling, FSH production by the pituitary gland, wound healing, extracellular matrix production, immunosuppression and carcinogenesis. Activin is also thought to have a paracrine or autocrine role in follicular development in the ovary. Within the receptor complex, the type-2 receptors act as a primary activin receptors (binds activin-A/INHBA, activin-B/INHBB as well as inhibin-A/INHA-INHBA). The type-1 receptors like ACVR1B act as downstream transducers of activin signals. Activin binds to type-2 receptor at the plasma membrane and activates its serine-threonine kinase. The activated receptor type-2 then phosphorylates and activates the type-1 receptor. Once activated, the type-1 receptor binds and phosphorylates the SMAD proteins SMAD2 and SMAD3, on serine residues of the C-terminal tail. Soon after their association with the activin receptor and subsequent phosphorylation, SMAD2 and SMAD3 are released into the cytoplasm where they interact with the common partner SMAD4. This SMAD complex translocates into the nucleus where it mediates activin-induced transcription. Inhibitory SMAD7, which is recruited to ACVR1B through FKBP1A, can prevent the association of SMAD2 and SMAD3 with the activin receptor complex, thereby blocking the activin signal. Activin signal transduction is also antagonized by the binding to the receptor of inhibin-B via the IGSF1 inhibin coreceptor. The polypeptide is Activin receptor type-2B (ACVR2B) (Homo sapiens (Human)).